The chain runs to 563 residues: Zinc finger protein 503 (563 aa).

The span at 1–10 shows a compositional bias: polar residues; sequence MITSPSASRN. 2 disordered regions span residues 1 to 48 and 101 to 226; these read MITS…PLRQ and SQIG…TSVS. Composition is skewed to low complexity over residues 19 to 33 and 112 to 122; these read SSSS…AVAS and SKLSSVTSNGS. Residues 174-194 show a composition bias toward polar residues; sequence ATCQPFTPRTGSPNSSTSASP. Over residues 199–211 the composition is skewed to basic and acidic residues; it reads GKGERDEKKDSDC. Positions 212-226 are enriched in polar residues; it reads NKNCSSDGSAPTSVS. Residues 431–459 form a C2H2-type zinc finger; the sequence is HVCNWVSANGPCDKRFSSSEELLNHLRTH.

The protein belongs to the Elbow/Noc family. As to quaternary structure, interacts with nlz1.

Its subcellular location is the nucleus. Required for segmental gene expression during hindbrain development. May function as a transcriptional repressor. The chain is Zinc finger protein 503 (znf503) from Danio rerio (Zebrafish).